A 405-amino-acid polypeptide reads, in one-letter code: Serpin B12 (405 aa).

The tract at residues 64 to 83 is disordered; the sequence is SQNESKEPDPCLKSNKQKAG.

The protein belongs to the serpin family. Ov-serpin subfamily. As to quaternary structure, interacts with SLFN12; as part of a pathway regulating cell differentiation. May interact with USP14. Expressed in many tissues, including brain, bone marrow, lymph node, heart, lung, liver, pancreas, testis, ovary, and intestine.

The protein resides in the cytoplasm. Functionally, inhibits trypsin and plasmin, but not thrombin, coagulation factor Xa, or urokinase-type plasminogen activator. May play a role in cell differentiation. The polypeptide is Serpin B12 (SERPINB12) (Homo sapiens (Human)).